A 401-amino-acid chain; its full sequence is Elongation factor Tu 1 (401 aa).

The tr-type G domain maps to 10–209; that stretch reads KPHVNVGTIG…AVDEYIPTPV (200 aa). Residues 19–26 form a G1 region; sequence GHVDHGKT. Residue 19 to 26 participates in GTP binding; it reads GHVDHGKT. Thr-26 provides a ligand contact to Mg(2+). The tract at residues 60–64 is G2; that stretch reads GITIA. A G3 region spans residues 81–84; it reads DCPG. GTP contacts are provided by residues 81–85 and 136–139; these read DCPGH and NKVD. Positions 136-139 are G4; the sequence is NKVD. The interval 174–176 is G5; the sequence is SAL.

This sequence belongs to the TRAFAC class translation factor GTPase superfamily. Classic translation factor GTPase family. EF-Tu/EF-1A subfamily. As to quaternary structure, monomer.

Its subcellular location is the cytoplasm. The catalysed reaction is GTP + H2O = GDP + phosphate + H(+). Its function is as follows. GTP hydrolase that promotes the GTP-dependent binding of aminoacyl-tRNA to the A-site of ribosomes during protein biosynthesis. The sequence is that of Elongation factor Tu 1 from Roseiflexus castenholzii (strain DSM 13941 / HLO8).